A 429-amino-acid chain; its full sequence is Methylenetetrahydrofolate--tRNA-(uracil-5-)-methyltransferase TrmFO (429 aa).

7–12 is a binding site for FAD; that stretch reads GAGLAG.

The protein belongs to the MnmG family. TrmFO subfamily. FAD is required as a cofactor.

Its subcellular location is the cytoplasm. It catalyses the reaction uridine(54) in tRNA + (6R)-5,10-methylene-5,6,7,8-tetrahydrofolate + NADH + H(+) = 5-methyluridine(54) in tRNA + (6S)-5,6,7,8-tetrahydrofolate + NAD(+). The catalysed reaction is uridine(54) in tRNA + (6R)-5,10-methylene-5,6,7,8-tetrahydrofolate + NADPH + H(+) = 5-methyluridine(54) in tRNA + (6S)-5,6,7,8-tetrahydrofolate + NADP(+). Functionally, catalyzes the folate-dependent formation of 5-methyl-uridine at position 54 (M-5-U54) in all tRNAs. The chain is Methylenetetrahydrofolate--tRNA-(uracil-5-)-methyltransferase TrmFO from Thermosipho africanus (strain TCF52B).